Here is a 144-residue protein sequence, read N- to C-terminus: Large ribosomal subunit protein uL16 (144 aa).

The protein belongs to the universal ribosomal protein uL16 family. In terms of assembly, part of the 50S ribosomal subunit.

Binds 23S rRNA and is also seen to make contacts with the A and possibly P site tRNAs. The protein is Large ribosomal subunit protein uL16 of Clostridium perfringens (strain ATCC 13124 / DSM 756 / JCM 1290 / NCIMB 6125 / NCTC 8237 / Type A).